The following is a 109-amino-acid chain: Aquaporin-2 (109 aa).

At 1 to 6 (SIAFSR) the chain is on the cytoplasmic side. A helical transmembrane segment spans residues 7-27 (AVFAEFLATLLFVFFGLGSAL). Residues 28 to 35 (NWPSALPS) lie on the Extracellular side of the membrane. The chain crosses the membrane as a helical span at residues 36–54 (TLQIAMAFGLGIGTLVQAL). Topologically, residues 55–59 (GHVSG) are cytoplasmic. The segment at residues 60-69 (AHINPAVTVA) is an intramembrane region (discontinuously helical). The NPA 1 motif lies at 63–65 (NPA). Residues 70-80 (CLVGCHVSFLR) lie on the Cytoplasmic side of the membrane. A helical transmembrane segment spans residues 81–102 (AAFYVAAQLLGAVAGAALLHEI). At 103-109 (TPAEVRG) the chain is on the extracellular side.

It belongs to the MIP/aquaporin (TC 1.A.8) family. As to quaternary structure, homotetramer. Serine phosphorylation is necessary and sufficient for expression at the apical membrane. Endocytosis is not phosphorylation-dependent. Post-translationally, N-glycosylated.

It is found in the apical cell membrane. Its subcellular location is the basolateral cell membrane. The protein resides in the cell membrane. It localises to the cytoplasmic vesicle membrane. The protein localises to the golgi apparatus. It is found in the trans-Golgi network membrane. The catalysed reaction is H2O(in) = H2O(out). It carries out the reaction glycerol(in) = glycerol(out). In terms of biological role, forms a water-specific channel that provides the plasma membranes of renal collecting duct with high permeability to water, thereby permitting water to move in the direction of an osmotic gradient. Plays an essential role in renal water homeostasis. Could also be permeable to glycerol. This is Aquaporin-2 from Oryctolagus cuniculus (Rabbit).